The following is a 47-amino-acid chain: Sperm protamine P1 (47 aa).

Belongs to the protamine P1 family. Testis.

It is found in the nucleus. It localises to the chromosome. In terms of biological role, protamines substitute for histones in the chromatin of sperm during the haploid phase of spermatogenesis. They compact sperm DNA into a highly condensed, stable and inactive complex. The polypeptide is Sperm protamine P1 (PRM1) (Orcinus orca (Killer whale)).